Here is a 380-residue protein sequence, read N- to C-terminus: Acyl-coenzyme A diphosphatase NUDT19 (380 aa).

The region spanning 8–264 (WKEAATLIVA…KIWIPPPQFY (257 aa)) is the Nudix hydrolase domain. A Nudix box motif is present at residues 115 to 136 (SLIPGEVATRICAIRETFEESG). 2 residues coordinate Mg(2+): Glu-130 and Glu-134. The Microbody targeting signal signature appears at 378–380 (NKL).

Belongs to the Nudix hydrolase family. In terms of assembly, monomer. Requires Mg(2+) as cofactor. Mn(2+) serves as cofactor.

Its subcellular location is the peroxisome. The catalysed reaction is an acyl-CoA + H2O = an acyl-4'-phosphopantetheine + adenosine 3',5'-bisphosphate + 2 H(+). The enzyme catalyses CoA + H2O = (R)-4'-phosphopantetheine + adenosine 3',5'-bisphosphate + 2 H(+). It carries out the reaction hexanoyl-CoA + H2O = hexanoyl-4'-phosphopantetheine + adenosine 3',5'-bisphosphate + 2 H(+). It catalyses the reaction octanoyl-CoA + H2O = S-octanoyl-4'-phosphopantetheine + adenosine 3',5'-bisphosphate + 2 H(+). The catalysed reaction is butanoyl-CoA + H2O = S-butanoyl-4'-phosphopantetheine + adenosine 3',5'-bisphosphate + 2 H(+). The enzyme catalyses propanoyl-CoA + H2O = propanoyl-4'-phosphopantetheine + adenosine 3',5'-bisphosphate + 2 H(+). It carries out the reaction malonyl-CoA + H2O = malonyl-4'-phosphopantetheine + adenosine 3',5'-bisphosphate + 2 H(+). It catalyses the reaction succinyl-CoA + H2O = succinyl-4'-phosphopantetheine + adenosine 3',5'-bisphosphate + 2 H(+). The catalysed reaction is choloyl-CoA + H2O = S-choloyl-4'-phosphopantetheine + adenosine 3',5'-bisphosphate + 2 H(+). The enzyme catalyses 4,8-dimethylnonanoyl-CoA + H2O = S-(4,8-dimethylnonanoyl)-4'-phosphopantetheine + adenosine 3',5'-bisphosphate + 2 H(+). It carries out the reaction (9Z,12Z,15Z)-octadecatrienoyl-CoA + H2O = S-(9Z,12Z,15Z-octadecatrienoyl)-4'-phosphopantetheine + adenosine 3',5'-bisphosphate + 2 H(+). It catalyses the reaction (9Z,12Z)-octadecadienoyl-CoA + H2O = S-(9Z,12Z-octadecadienoyl)-4'-phosphopantetheine + adenosine 3',5'-bisphosphate + 2 H(+). The catalysed reaction is (9Z)-hexadecenoyl-CoA + H2O = S-(9Z-hexadecenoyl)-4'-phosphopantetheine + adenosine 3',5'-bisphosphate + 2 H(+). The enzyme catalyses (9Z)-tetradecenoyl-CoA + H2O = S-(9Z-tetradecenoyl)-4'-phosphopantetheine + adenosine 3',5'-bisphosphate + 2 H(+). It carries out the reaction (6Z)-octenoyl-CoA + H2O = S-(6Z-octenoyl)-4'-phosphopantetheine + adenosine 3',5'-bisphosphate + 2 H(+). It catalyses the reaction hexadecanoyl-CoA + H2O = S-hexadecanoyl-4'-phosphopantetheine + adenosine 3',5'-bisphosphate + 2 H(+). The catalysed reaction is tetradecanoyl-CoA + H2O = tetradecanoyl-4'-phosphopantetheine + adenosine 3',5'-bisphosphate + 2 H(+). The enzyme catalyses dodecanoyl-CoA + H2O = S-dodecanoyl-4'-phosphopantetheine + adenosine 3',5'-bisphosphate + 2 H(+). It carries out the reaction a 5'-end CoA-ribonucleoside in mRNA + H2O = a 5'-end phospho-adenosine-phospho-ribonucleoside in mRNA + (R)-4'-phosphopantetheine + 2 H(+). In terms of biological role, fatty acyl-coenzyme A (CoA) diphosphatase that hydrolyzes fatty acyl-CoA to yield acyl-4'-phosphopantetheine and adenosine 3',5'-bisphosphate. Mediates the hydrolysis of a wide range of CoA esters, including choloyl-CoA and branched-chain fatty-acyl-CoA esters and at low substrate concentrations medium and long-chain fatty-acyl-CoA esters are the primary substrates. Highest activity seen with medium-chain acyl-CoA esters and higher rates of activity seen with the unsaturated acyl-CoA esters compared with the saturated esters. Exhibits decapping activity towards dpCoA-capped RNAs in vitro. The protein is Acyl-coenzyme A diphosphatase NUDT19 (nudt19) of Xenopus laevis (African clawed frog).